Reading from the N-terminus, the 245-residue chain is Probable transcriptional regulatory protein MARTH_orf271 (245 aa).

This sequence belongs to the TACO1 family.

It is found in the cytoplasm. The chain is Probable transcriptional regulatory protein MARTH_orf271 from Metamycoplasma arthritidis (strain 158L3-1) (Mycoplasma arthritidis).